Consider the following 513-residue polypeptide: Steroid (22S)-hydroxylase (513 aa).

A helical membrane pass occupies residues 8–28; sequence TLLPLLLLPSLLSLLLFLILL. The segment at 252 to 277 is disordered; that stretch reads DIKEEDQEEEEVKTEDEAEMSKSDHV. Over residues 254–269 the composition is skewed to acidic residues; that stretch reads KEEDQEEEEVKTEDEA. A heme-binding site is contributed by Cys462.

This sequence belongs to the cytochrome P450 family. Heme is required as a cofactor. In terms of tissue distribution, expressed in stems, leaves, shoots, and roots, with a higher expression in siliques and apical shoots.

It localises to the membrane. It catalyses the reaction a C27-steroid + reduced [NADPH--hemoprotein reductase] + O2 = a (22S)-22-hydroxy C27-steroid + oxidized [NADPH--hemoprotein reductase] + H2O + H(+). The enzyme catalyses a C28-steroid + reduced [NADPH--hemoprotein reductase] + O2 = a (22S)-22-hydroxy C28-steroid + oxidized [NADPH--hemoprotein reductase] + H2O + H(+). The catalysed reaction is a C29-steroid + reduced [NADPH--hemoprotein reductase] + O2 = a (22S)-22-hydroxy C29-steroid + oxidized [NADPH--hemoprotein reductase] + H2O + H(+). It carries out the reaction cholesterol + reduced [NADPH--hemoprotein reductase] + O2 = (22S)-22-hydroxycholesterol + oxidized [NADPH--hemoprotein reductase] + H2O + H(+). It catalyses the reaction cholestanol + reduced [NADPH--hemoprotein reductase] + O2 = (22S)-22-hydroxycholestanol + oxidized [NADPH--hemoprotein reductase] + H2O + H(+). The enzyme catalyses campestanol + reduced [NADPH--hemoprotein reductase] + O2 = 6-deoxycathasterone + oxidized [NADPH--hemoprotein reductase] + H2O + H(+). The catalysed reaction is campesterol + reduced [NADPH--hemoprotein reductase] + O2 = (22S)-22-hydroxycampesterol + oxidized [NADPH--hemoprotein reductase] + H2O + H(+). It carries out the reaction 6-oxocampestanol + reduced [NADPH--hemoprotein reductase] + O2 = cathasterone + oxidized [NADPH--hemoprotein reductase] + H2O + H(+). It catalyses the reaction sitosterol + reduced [NADPH--hemoprotein reductase] + O2 = (22S)-22-hydroxysitosterol + oxidized [NADPH--hemoprotein reductase] + H2O + H(+). It functions in the pathway plant hormone biosynthesis; brassinosteroid biosynthesis. Its function is as follows. Catalyzes the C22-alpha-hydroxylation step in brassinosteroids biosynthesis. Converts campesterol (CR) to (22S)-22-hydroxycampesterol (22-OHCR, 22-hydroxyCR), campestanol (CN) to 6-deoxycathasterone (6-deoxoCT), and 6-oxocampestanol (6-oxoCN) to cathasterone (CT). Can also use cholesterol and cholestanol as substrates. The sequence is that of Steroid (22S)-hydroxylase from Arabidopsis thaliana (Mouse-ear cress).